Reading from the N-terminus, the 311-residue chain is ATP synthase subunit a (311 aa).

The next 6 helical transmembrane spans lie at 62-82, 123-143, 179-199, 213-233, 253-273, and 276-296; these read AVHV…GFFM, VAPM…MDLI, VTVF…WGFI, FWYF…VALI, IFIL…LGGI, and FGWA…FMVL.

The protein belongs to the ATPase A chain family. As to quaternary structure, F-type ATPases have 2 components, CF(1) - the catalytic core - and CF(0) - the membrane proton channel. CF(1) has five subunits: alpha(3), beta(3), gamma(1), delta(1), epsilon(1). CF(0) has three main subunits: a(1), b(2) and c(9-12). The alpha and beta chains form an alternating ring which encloses part of the gamma chain. CF(1) is attached to CF(0) by a central stalk formed by the gamma and epsilon chains, while a peripheral stalk is formed by the delta and b chains.

It localises to the cell inner membrane. In terms of biological role, key component of the proton channel; it plays a direct role in the translocation of protons across the membrane. This Teredinibacter turnerae (strain ATCC 39867 / T7901) protein is ATP synthase subunit a.